We begin with the raw amino-acid sequence, 224 residues long: Cytidylate kinase (224 aa).

An ATP-binding site is contributed by 10-18 (GPSGVGKGT).

The protein belongs to the cytidylate kinase family. Type 1 subfamily.

It is found in the cytoplasm. It catalyses the reaction CMP + ATP = CDP + ADP. It carries out the reaction dCMP + ATP = dCDP + ADP. This is Cytidylate kinase from Haemophilus ducreyi (strain 35000HP / ATCC 700724).